The primary structure comprises 286 residues: Thiazole synthase (286 aa).

The Schiff-base intermediate with DXP role is filled by Lys-122. Residues Gly-183, 209–210 (AG), and 231–232 (NT) contribute to the 1-deoxy-D-xylulose 5-phosphate site.

Belongs to the ThiG family. Homotetramer. Forms heterodimers with either ThiH or ThiS.

The protein resides in the cytoplasm. It catalyses the reaction [ThiS sulfur-carrier protein]-C-terminal-Gly-aminoethanethioate + 2-iminoacetate + 1-deoxy-D-xylulose 5-phosphate = [ThiS sulfur-carrier protein]-C-terminal Gly-Gly + 2-[(2R,5Z)-2-carboxy-4-methylthiazol-5(2H)-ylidene]ethyl phosphate + 2 H2O + H(+). It functions in the pathway cofactor biosynthesis; thiamine diphosphate biosynthesis. Catalyzes the rearrangement of 1-deoxy-D-xylulose 5-phosphate (DXP) to produce the thiazole phosphate moiety of thiamine. Sulfur is provided by the thiocarboxylate moiety of the carrier protein ThiS. In vitro, sulfur can be provided by H(2)S. The polypeptide is Thiazole synthase (Synechococcus elongatus (strain ATCC 33912 / PCC 7942 / FACHB-805) (Anacystis nidulans R2)).